Consider the following 406-residue polypeptide: Phosphoglycerate kinase (406 aa).

Substrate-binding positions include 22–24 (DLN), Arg-37, 60–63 (HLGN), Arg-119, and Arg-152. ATP contacts are provided by residues Lys-202, Glu-325, and 355–358 (GGDT).

It belongs to the phosphoglycerate kinase family. Monomer.

The protein resides in the cytoplasm. It catalyses the reaction (2R)-3-phosphoglycerate + ATP = (2R)-3-phospho-glyceroyl phosphate + ADP. It participates in carbohydrate degradation; glycolysis; pyruvate from D-glyceraldehyde 3-phosphate: step 2/5. This chain is Phosphoglycerate kinase, found in Orientia tsutsugamushi (strain Ikeda) (Rickettsia tsutsugamushi).